A 347-amino-acid polypeptide reads, in one-letter code: MRIEEDLKLGFKDVLIRPKRSTLKSRSDVELERQFTFKHSGQTWSGVPIIAANMDTVGTFEMASALASFDILTAVHKHYSVEDWNAFTSTASEDVLRHVMVSTGTSDADFEKTKQILAQSPALNFVCIDVANGYSEHFVQFVSKAREAWPTKTICAGNVVTGEMCEELVLSGADIVKVGIGPGSVCTTRVKTGVGYPQLSAVIECADAAHGLGGMIVSDGGCTMPGDVAKAFGGGADFVMLGGMLAGHEESGGKIVEENGEKFMLFYGMSSESAMTRHVGGVAQYRAAEGKTVKLPLRGPVEYTARDILGGLRSACTYVGASRLKELTKRTTFIRVQEQENRVFNSL.

A108–A131 is a binding site for NADP(+). Positions 181 and 183 each coordinate K(+). The Thioimidate intermediate role is filled by C186. I216 to V239 serves as a coordination point for NADP(+).

It belongs to the IMPDH/GMPR family. GuaC type 1 subfamily. Homotetramer.

It catalyses the reaction IMP + NH4(+) + NADP(+) = GMP + NADPH + 2 H(+). Functionally, catalyzes the irreversible NADPH-dependent deamination of GMP to IMP. It functions in the conversion of nucleobase, nucleoside and nucleotide derivatives of G to A nucleotides, and in maintaining the intracellular balance of A and G nucleotides. The sequence is that of GMP reductase from Citrobacter koseri (strain ATCC BAA-895 / CDC 4225-83 / SGSC4696).